We begin with the raw amino-acid sequence, 754 residues long: 1,4-alpha-glucan branching enzyme GlgB (754 aa).

Catalysis depends on D431, which acts as the Nucleophile. E484 acts as the Proton donor in catalysis.

It belongs to the glycosyl hydrolase 13 family. GlgB subfamily. Monomer.

It carries out the reaction Transfers a segment of a (1-&gt;4)-alpha-D-glucan chain to a primary hydroxy group in a similar glucan chain.. Its pathway is glycan biosynthesis; glycogen biosynthesis. Its function is as follows. Catalyzes the formation of the alpha-1,6-glucosidic linkages in glycogen by scission of a 1,4-alpha-linked oligosaccharide from growing alpha-1,4-glucan chains and the subsequent attachment of the oligosaccharide to the alpha-1,6 position. The protein is 1,4-alpha-glucan branching enzyme GlgB of Prochlorococcus marinus (strain MIT 9515).